We begin with the raw amino-acid sequence, 90 residues long: MMKTSVMFMLVVVISLMCSSEAQEVARTYCGRDLADTLADLCFGVEKRGVAQYAPYFWTRQYLGSRGKRGVVDECCFRPCTLDVLLSYCG.

Residues 1–20 form the signal peptide; sequence MMKTSVMFMLVVVISLMCSS. Cystine bridges form between cysteine 30–cysteine 76, cysteine 42–cysteine 89, and cysteine 75–cysteine 80. A propeptide spans 49 to 67 (c peptide like); that stretch reads GVAQYAPYFWTRQYLGSRG.

The protein belongs to the insulin family. In terms of assembly, heterodimer of a B chain and an A chain linked by two disulfide bonds.

The protein resides in the secreted. In terms of biological role, brain peptide responsible for activation of prothoracic glands to produce ecdysone in insects. The polypeptide is Bombyxin B-6 (BBXB6) (Bombyx mori (Silk moth)).